Reading from the N-terminus, the 326-residue chain is HTH-type transcriptional regulator BlaA (326 aa).

Positions 1–59 (MDVVNACRAFVKVSERGSFTVGAAAAQMSQSVASRRVAALEKHFGERLFDRASRRPSLT) constitute an HTH lysR-type domain. A DNA-binding region (H-T-H motif) is located at residues 19–38 (FTVGAAAAQMSQSVASRRVA). The interval 289–326 (TADHGPDPATGAGPGADAGTEPGARAEPGAPEEGAQAC) is disordered. A compositionally biased stretch (low complexity) spans 295-326 (DPATGAGPGADAGTEPGARAEPGAPEEGAQAC).

The protein belongs to the LysR transcriptional regulatory family.

Positive regulator of the expression of the gene (blaB) for beta-lactamase. It binds to the blaL-blaA intercistronic region. This chain is HTH-type transcriptional regulator BlaA (blaA), found in Streptomyces cacaoi.